A 145-amino-acid chain; its full sequence is Cystatin-like 1 (145 aa).

The N-terminal stretch at 1–19 (MGIGCWRNPLLLLIALVLS) is a signal peptide. Residues 37-115 (SKKNMNSTLN…KKLRKSLICE (79 aa)) form the Cystatin domain. An N-linked (GlcNAc...) asparagine glycan is attached at asparagine 42. Cystine bridges form between cysteine 91-cysteine 101 and cysteine 114-cysteine 134.

This sequence belongs to the cystatin family.

Its subcellular location is the secreted. In Homo sapiens (Human), this protein is Cystatin-like 1 (CSTL1).